A 130-amino-acid chain; its full sequence is Small ribosomal subunit protein uS9 (130 aa).

This sequence belongs to the universal ribosomal protein uS9 family.

The chain is Small ribosomal subunit protein uS9 from Blochmanniella floridana.